The following is a 286-amino-acid chain: Shikimate dehydrogenase (NADP(+)) (286 aa).

Shikimate contacts are provided by residues 19-21 (SVS) and threonine 66. Lysine 70 serves as the catalytic Proton acceptor. Positions 91 and 106 each coordinate shikimate. NADP(+) is bound by residues 130–134 (GAGGS) and alanine 225. Tyrosine 227 serves as a coordination point for shikimate. Glycine 248 contributes to the NADP(+) binding site.

It belongs to the shikimate dehydrogenase family. In terms of assembly, homodimer.

The catalysed reaction is shikimate + NADP(+) = 3-dehydroshikimate + NADPH + H(+). Its pathway is metabolic intermediate biosynthesis; chorismate biosynthesis; chorismate from D-erythrose 4-phosphate and phosphoenolpyruvate: step 4/7. Involved in the biosynthesis of the chorismate, which leads to the biosynthesis of aromatic amino acids. Catalyzes the reversible NADPH linked reduction of 3-dehydroshikimate (DHSA) to yield shikimate (SA). In Dehalococcoides mccartyi (strain CBDB1), this protein is Shikimate dehydrogenase (NADP(+)).